The chain runs to 686 residues: Antigen peptide transporter 2 (686 aa).

Topologically, residues 1–6 (MRLPDL) are lumenal. Residues 7 to 27 (RPWTSLLLVDAALLWLLQGPL) traverse the membrane as a helical segment. The Cytoplasmic segment spans residues 28–56 (GTLLPQGLPGLWLEGTLRLGGLWGLLKLR). A helical transmembrane segment spans residues 57 to 77 (GLLGFVGTLLLPLCLATPLTV). Residues 78–98 (SLRALVAGASRAPPARVASAP) are Lumenal-facing. The chain crosses the membrane as a helical span at residues 99–119 (WSWLLVGYGAAGLSWSLWAVL). Topologically, residues 120-148 (SPPGAQEKEQDQVNNKVLMWRLLKLSRPD) are cytoplasmic. Residues 149 to 169 (LPLLVAAFFFLVLAVLGETLI) form a helical membrane-spanning segment. The 284-residue stretch at 152–435 (LVAAFFFLVL…LVYIYGDMLS (284 aa)) folds into the ABC transmembrane type-1 domain. Topologically, residues 170 to 187 (PHYSGRVIDILGGDFDPH) are lumenal. A helical membrane pass occupies residues 188-208 (AFASAIFFMCLFSFGSSLSAG). The Cytoplasmic segment spans residues 209 to 266 (CRGGCFTYTMSRINLRIREQLFSSLLRQDLGFFQETKTGELNSRLSSDTTLMSNWLPL). The helical transmembrane segment at 267-287 (NANVLLRSLVKVVGLYGFMLS) threads the bilayer. Residues 288 to 293 (ISPRLT) are Lumenal-facing. A helical membrane pass occupies residues 294-314 (LLSLLHMPFTIAAEKVYNTRH). Positions 301-389 (PFTIAAEKVY…RRVLHLGVQM (89 aa)) are part of the peptide-binding site. At 315-374 (QEVLREIQDAVARAGQVVREAVGGLQTVRSFGAEEHEVCRYKEALEQCRQLYWRRDLERA) the chain is on the cytoplasmic side. Residues 375–395 (LYLLVRRVLHLGVQMLMLSCG) form a helical membrane-spanning segment. Residues 396–408 (LQQMQDGELTQGS) are Lumenal-facing. A helical membrane pass occupies residues 409-429 (LLSFMIYQESVGSYVQTLVYI). Positions 414–433 (IYQESVGSYVQTLVYIYGDM) are part of the peptide-binding site. The Cytoplasmic portion of the chain corresponds to 430 to 686 (YGDMLSNVGA…EGKLQKLAQL (257 aa)). The ABC transporter domain maps to 468 to 686 (VKFQDVSFAY…EGKLQKLAQL (219 aa)). 503 to 510 (GPNGSGKS) serves as a coordination point for ATP.

Belongs to the ABC transporter superfamily. ABCB family. MHC peptide exporter (TC 3.A.1.209) subfamily. As to quaternary structure, heterodimer of TAP1 and TAP2 (TAP1-TAP2). A component of the peptide loading complex (PLC), interacts via TAPBP with MHCI heterodimer; this interaction mediates peptide-MHCI assembly. Recruits TAPBP in a 1:1 stoichiometry. Interacts with classical MHCI such as HLA-A*02-B2M; this interaction is obligatory for the loading of peptide epitopes. Interacts with non-classical MHCI molecules including HLA-E-B2M and HLA-F-B2M as well as PLC component CALR before the peptide loading. (Microbial infection) Interacts with Epstein-Barr virus BLNF2a. In terms of assembly, (Microbial infection) Interacts with herpes simplex virus US12/ICP47. As to quaternary structure, (Microbial infection) Interacts with adenovirus E3-19K glycoprotein, which binds TAP1-TAP2 and acts as a TAPBP inhibitor, preventing TAP1-TAP2 association with MHCI. Mg(2+) is required as a cofactor.

It is found in the endoplasmic reticulum membrane. It carries out the reaction a peptide antigen(in) + ATP + H2O = a peptide antigen(out) + ADP + phosphate + H(+). Inhibited at high ER lumenal peptide concentrations. Its activity is regulated as follows. (Microbial infection) Inhibited by herpes simplex virus US12/ICP47 protein, which blocks the peptide-binding site of TAP1-TAP2. With respect to regulation, (Microbial infection) Inhibited by human cytomegalovirus US6 glycoprotein, which binds to the lumenal side of TAP1-TAP2 complex and inhibits peptide translocation by specifically blocking ATP-binding and preventing TAP1-TAP2 conformational rearrangement induced by peptide binding. Functionally, ABC transporter associated with antigen processing. In complex with TAP1 mediates unidirectional translocation of peptide antigens from cytosol to endoplasmic reticulum (ER) for loading onto MHC class I (MHCI) molecules. Uses the chemical energy of ATP to export peptides against the concentration gradient. During the transport cycle alternates between 'inward-facing' state with peptide binding site facing the cytosol to 'outward-facing' state with peptide binding site facing the ER lumen. Peptide antigen binding to ATP-loaded TAP1-TAP2 induces a switch to hydrolysis-competent 'outward-facing' conformation ready for peptide loading onto nascent MHCI molecules. Subsequently ATP hydrolysis resets the transporter to the 'inward facing' state for a new cycle. Typically transports intracellular peptide antigens of 8 to 13 amino acids that arise from cytosolic proteolysis via IFNG-induced immunoproteasome. Binds peptides with free N- and C-termini, the first three and the C-terminal residues being critical. Preferentially selects peptides having a highly hydrophobic residue at position 3 and hydrophobic or charged residues at the C-terminal anchor. Proline at position 2 has the most destabilizing effect. As a component of the peptide loading complex (PLC), acts as a molecular scaffold essential for peptide-MHCI assembly and antigen presentation. The protein is Antigen peptide transporter 2 of Homo sapiens (Human).